Consider the following 667-residue polypeptide: Transketolase (667 aa).

Residue histidine 27 coordinates substrate. Thiamine diphosphate contacts are provided by residues histidine 67 and 115 to 117; that span reads GPL. Position 156 (aspartate 156) interacts with Mg(2+). Positions 157 and 186 each coordinate thiamine diphosphate. Mg(2+) is bound by residues asparagine 186 and isoleucine 188. Residues histidine 262, arginine 357, and serine 384 each contribute to the substrate site. Residue histidine 262 participates in thiamine diphosphate binding. Glutamate 411 (proton donor) is an active-site residue. Phenylalanine 437 serves as a coordination point for thiamine diphosphate. Substrate-binding residues include histidine 461, aspartate 469, and arginine 520.

It belongs to the transketolase family. In terms of assembly, homodimer. It depends on Mg(2+) as a cofactor. Requires Ca(2+) as cofactor. Mn(2+) is required as a cofactor. The cofactor is Co(2+). Thiamine diphosphate serves as cofactor.

The enzyme catalyses D-sedoheptulose 7-phosphate + D-glyceraldehyde 3-phosphate = aldehydo-D-ribose 5-phosphate + D-xylulose 5-phosphate. Catalyzes the transfer of a two-carbon ketol group from a ketose donor to an aldose acceptor, via a covalent intermediate with the cofactor thiamine pyrophosphate. The polypeptide is Transketolase (tkt) (Bacillus subtilis (strain 168)).